A 1700-amino-acid chain; its full sequence is A-kinase anchor protein SPHKAP (1700 aa).

Disordered regions lie at residues 364–385 (SNLNPGDHEDTRNALPPRQDGE), 742–778 (IRRRETEPSCQPSDPGASQAWTKATESSSSSPLSNSH), and 793–885 (SKQD…NTQE). The segment covering 768–778 (SSSSSPLSNSH) has biased composition (low complexity). The span at 822–831 (DSSTATTSSK) shows a compositional bias: polar residues. A compositionally biased stretch (basic and acidic residues) spans 839 to 855 (AGEDTKSPHHSENECRA). Residues 857 to 873 (SEGQRSPTVSQSRSGSQ) show a composition bias toward polar residues. The interval 929–946 (FAEELADTVVSMATEIAA) is PKA-RII subunit binding domain. The segment at 980–1006 (KRKKESQGSGTAVRKHKPPRLSEIKRK) is disordered. 8 positions are modified to phosphoserine: S1025, S1085, S1107, S1120, S1121, S1124, S1259, and S1288. Disordered stretches follow at residues 1374 to 1414 (DSVT…PVPI), 1481 to 1535 (IHSD…DTSS), and 1585 to 1604 (GQSESTEAPASGPPTGTASP). Residues 1383 to 1398 (PVSSLSKTASLTNHSP) show a composition bias toward polar residues. Positions 1586-1604 (QSESTEAPASGPPTGTASP) are enriched in polar residues.

The protein belongs to the AKAP110 family. As to quaternary structure, interacts (via the PKA-RII subunit binding domain) with the RI subunit of PKA. Interacts with SPHK1; the interaction greatly reduces SPHK1 activity. Highly expressed in heart. Both isoforms abundantly expressed in ventricle. Also expressed in spleen, ovary and brain.

It localises to the cytoplasm. Its function is as follows. Anchoring protein that binds preferentially to the type I regulatory subunit of c-AMP-dependent protein kinase (PKA type I) and targets it to distinct subcellular compartments. May act as a converging factor linking cAMP and sphingosine signaling pathways. Plays a regulatory role in the modulation of SPHK1. In Homo sapiens (Human), this protein is A-kinase anchor protein SPHKAP (SPHKAP).